A 101-amino-acid chain; its full sequence is Urease subunit beta (101 aa).

This sequence belongs to the urease beta subunit family. As to quaternary structure, heterotrimer of UreA (gamma), UreB (beta) and UreC (alpha) subunits. Three heterotrimers associate to form the active enzyme.

The protein localises to the cytoplasm. The enzyme catalyses urea + 2 H2O + H(+) = hydrogencarbonate + 2 NH4(+). Its pathway is nitrogen metabolism; urea degradation; CO(2) and NH(3) from urea (urease route): step 1/1. This is Urease subunit beta from Polaromonas naphthalenivorans (strain CJ2).